The chain runs to 657 residues: Penicillin-binding protein activator LpoA (657 aa).

The N-terminal stretch at 1–25 is a signal peptide; it reads MLSSTFVRSKAGLVPVILAALILAA. Cys26 carries the N-palmitoyl cysteine lipid modification. Cys26 is lipidated: S-diacylglycerol cysteine.

Belongs to the LpoA family. Interacts with PBP1a.

Its subcellular location is the cell outer membrane. In terms of biological role, regulator of peptidoglycan synthesis that is essential for the function of penicillin-binding protein 1A (PBP1a). The polypeptide is Penicillin-binding protein activator LpoA (Yersinia pestis bv. Antiqua (strain Angola)).